The following is a 307-amino-acid chain: Mycothiol acetyltransferase (307 aa).

2 consecutive N-acetyltransferase domains span residues 12 to 152 (TRTD…APIP) and 160 to 307 (VTLR…YQRS). E43 is a 1D-myo-inositol 2-(L-cysteinylamino)-2-deoxy-alpha-D-glucopyranoside binding site. 87–89 (LAV) provides a ligand contact to acetyl-CoA. E187, K227, and E239 together coordinate 1D-myo-inositol 2-(L-cysteinylamino)-2-deoxy-alpha-D-glucopyranoside. Acetyl-CoA contacts are provided by residues 243-245 (LGV) and 250-256 (HGGGLGK). Y278 is a 1D-myo-inositol 2-(L-cysteinylamino)-2-deoxy-alpha-D-glucopyranoside binding site.

It belongs to the acetyltransferase family. MshD subfamily. In terms of assembly, monomer.

It catalyses the reaction 1D-myo-inositol 2-(L-cysteinylamino)-2-deoxy-alpha-D-glucopyranoside + acetyl-CoA = mycothiol + CoA + H(+). Functionally, catalyzes the transfer of acetyl from acetyl-CoA to desacetylmycothiol (Cys-GlcN-Ins) to form mycothiol. The chain is Mycothiol acetyltransferase from Salinispora arenicola (strain CNS-205).